The sequence spans 435 residues: 3-phosphoshikimate 1-carboxyvinyltransferase (435 aa).

The 3-phosphoshikimate site is built by Lys-23, Ser-24, and Arg-28. Position 23 (Lys-23) interacts with phosphoenolpyruvate. Residues Gly-97 and Arg-125 each coordinate phosphoenolpyruvate. 7 residues coordinate 3-phosphoshikimate: Ser-170, Ser-171, Gln-172, Ser-198, Asp-315, Asn-338, and Lys-342. Gln-172 contacts phosphoenolpyruvate. Residue Asp-315 is the Proton acceptor of the active site. Phosphoenolpyruvate contacts are provided by Arg-346, Arg-388, and Lys-413.

It belongs to the EPSP synthase family. In terms of assembly, monomer.

Its subcellular location is the cytoplasm. It catalyses the reaction 3-phosphoshikimate + phosphoenolpyruvate = 5-O-(1-carboxyvinyl)-3-phosphoshikimate + phosphate. It functions in the pathway metabolic intermediate biosynthesis; chorismate biosynthesis; chorismate from D-erythrose 4-phosphate and phosphoenolpyruvate: step 6/7. Catalyzes the transfer of the enolpyruvyl moiety of phosphoenolpyruvate (PEP) to the 5-hydroxyl of shikimate-3-phosphate (S3P) to produce enolpyruvyl shikimate-3-phosphate and inorganic phosphate. This chain is 3-phosphoshikimate 1-carboxyvinyltransferase, found in Buchnera aphidicola subsp. Cinara cedri (strain Cc).